The sequence spans 276 residues: Large ribosomal subunit protein uL2 (276 aa).

The segment at 203 to 276 (NVSSGKAGRT…SDKFIVKRRK (74 aa)) is disordered. The span at 210–220 (GRTRWLGRRPQ) shows a compositional bias: basic residues. A compositionally biased stretch (basic and acidic residues) spans 265–276 (KPSDKFIVKRRK).

Belongs to the universal ribosomal protein uL2 family. Part of the 50S ribosomal subunit. Forms a bridge to the 30S subunit in the 70S ribosome.

Its function is as follows. One of the primary rRNA binding proteins. Required for association of the 30S and 50S subunits to form the 70S ribosome, for tRNA binding and peptide bond formation. It has been suggested to have peptidyltransferase activity; this is somewhat controversial. Makes several contacts with the 16S rRNA in the 70S ribosome. This is Large ribosomal subunit protein uL2 from Coprothermobacter proteolyticus (strain ATCC 35245 / DSM 5265 / OCM 4 / BT).